Here is a 1545-residue protein sequence, read N- to C-terminus: ATP-binding cassette sub-family C member 9 (1545 aa).

The Extracellular portion of the chain corresponds to 1–30 (MSLSFCGNNISSYNIYHGVLQNPCFVDALN). An N-linked (GlcNAc...) asparagine glycan is attached at Asn-9. The helical transmembrane segment at 31-51 (LVPHVFLLFITFPILFIGWGS) threads the bilayer. The Cytoplasmic segment spans residues 52-72 (QSSKVQIHHNTWLHFPGHNLR). Residues 73 to 93 (WILTFALLFVHVCEIAEGIVS) form a helical membrane-spanning segment. Residues 94–101 (DSQRASRH) lie on the Extracellular side of the membrane. A helical transmembrane segment spans residues 102–122 (LHLFMPAVMGFVATTTSIVYY). The Cytoplasmic portion of the chain corresponds to 123–132 (HNIETSNFPK). Residues 133-153 (LLLALFLYWVMAFITKTIKLV) traverse the membrane as a helical segment. Topologically, residues 154 to 167 (KYWQLGWGMSDLRF) are extracellular. A helical transmembrane segment spans residues 168–188 (CITGVMVILNGLLMAVEINVI). At 189–301 (RVRRYVFFMN…AFGRPILLSS (113 aa)) the chain is on the cytoplasmic side. The ABC transmembrane type-1 1 domain occupies 297-594 (ILLSSTFRYL…LSTVVRFAVK (298 aa)). The chain crosses the membrane as a helical span at residues 302–322 (TFRYLADLLGFAGPLCISGIV). At 323–347 (QRVNEPKNNTTRFSETLSSKEFLEN) the chain is on the extracellular side. Residues Asn-330 and Asn-331 are each glycosylated (N-linked (GlcNAc...) asparagine). A helical membrane pass occupies residues 348 to 368 (AHVLAVLLFLALILQRTFLQA). Topologically, residues 369-420 (SYYVTIETGINLRGALLAMIYNKILRLSTSNLSMGEMTLGQINNLVAIETNQ) are cytoplasmic. The helical transmembrane segment at 421–441 (LMWFLFLCPNLWAMPVQIIMG) threads the bilayer. The Extracellular segment spans residues 442-452 (VILLYNLLGSS). A helical transmembrane segment spans residues 453 to 473 (ALVGAAVIVLLAPIQYFIATK). Residues 474–528 (LAEAQKSTLDYSTERLKKTNEILKGIKLLKLYAWEHIFCKSVEETRMKELSSLKT) lie on the Cytoplasmic side of the membrane. A helical transmembrane segment spans residues 529 to 549 (FALYTSLSIFMNAAIPIAAVL). Residues 550–568 (ATFVTHAYASGNNLKPAEA) lie on the Extracellular side of the membrane. Residues 569 to 589 (FASLSLFHILVTPLFLLSTVV) traverse the membrane as a helical segment. Topologically, residues 590 to 986 (RFAVKAIISV…TCWWYLTSGG (397 aa)) are cytoplasmic. The ABC transporter 1 domain occupies 668–908 (IKVTNGYFSW…DVELYEHWKT (241 aa)). 701–708 (GQVGCGKS) provides a ligand contact to ATP. Residues 940-963 (REAKAQMEDEDEEEEEEEDEDDNM) form a disordered region. Residues 947–962 (EDEDEEEEEEEDEDDN) are compositionally biased toward acidic residues. A helical transmembrane segment spans residues 987–1007 (FFLLFLMIFSKLLKHSVIVAI). An ABC transmembrane type-1 2 domain is found at 990–1270 (LFLMIFSKLL…VVRNLADLEV (281 aa)). Over 1008–1030 (DYWLATWTSEYSINDPGKADQTF) the chain is Extracellular. A helical membrane pass occupies residues 1031-1051 (YVAGFSILCGAGIFLCLVTSL). Topologically, residues 1052-1123 (TVEWMGLTAA…TLLCLSAIGM (72 aa)) are cytoplasmic. Residues 1124 to 1144 (ISYATPVFLIALAPLGVAFYF) traverse the membrane as a helical segment. Residues 1145-1241 (IQKYFRVASK…IASISGSSNS (97 aa)) are Extracellular-facing. A helical transmembrane segment spans residues 1242–1262 (GLVGLGLLYALTITNYLNWVV). Residues 1263 to 1545 (RNLADLEVQM…LFSTLVMTNK (283 aa)) are Cytoplasmic-facing. An ABC transporter 2 domain is found at 1308–1542 (IKIHDLCVRY…KNGLFSTLVM (235 aa)). 1342-1349 (GRTGSGKS) is a binding site for ATP.

It belongs to the ABC transporter superfamily. ABCC family. Conjugate transporter (TC 3.A.1.208) subfamily. As to quaternary structure, interacts with KCNJ11. Interacts with KCNJ8. As to expression, expressed at high levels in heart, skeletal muscle and ovary. Moderate levels are found in brain, tongue and pancreatic islets. Low levels are found in lung, testis and adrenal gland. Expressed at very low levels in stomach, colon, thyroid and pituitary.

The protein localises to the membrane. Its function is as follows. Subunit of ATP-sensitive potassium channels (KATP). Can form cardiac and smooth muscle-type KATP channels with KCNJ11. KCNJ11 forms the channel pore while ABCC9 is required for activation and regulation. Can form a sulfonylurea-sensitive but ATP-insensitive potassium channel with KCNJ8. This chain is ATP-binding cassette sub-family C member 9 (Abcc9), found in Rattus norvegicus (Rat).